The sequence spans 182 residues: Protein Syd (182 aa).

The protein belongs to the Syd family.

It is found in the cell inner membrane. In terms of biological role, interacts with the SecY protein in vivo. May bind preferentially to an uncomplexed state of SecY, thus functioning either as a chelating agent for excess SecY in the cell or as a regulatory factor that negatively controls the translocase function. This Aeromonas salmonicida (strain A449) protein is Protein Syd.